Consider the following 440-residue polypeptide: tRNA-2-methylthio-N(6)-dimethylallyladenosine synthase (440 aa).

One can recognise an MTTase N-terminal domain in the interval 5–121; the sequence is KLLYLETFGC…LPELVRAAEK (117 aa). 6 residues coordinate [4Fe-4S] cluster: cysteine 14, cysteine 50, cysteine 84, cysteine 159, cysteine 163, and cysteine 166. Positions 145-375 constitute a Radical SAM core domain; sequence RTDGVSRFVT…LDLQRRITLE (231 aa). A TRAM domain is found at 378 to 440; the sequence is KSFVGTVQQV…QNSLQGELCR (63 aa).

Belongs to the methylthiotransferase family. MiaB subfamily. In terms of assembly, monomer. [4Fe-4S] cluster serves as cofactor.

The protein localises to the cytoplasm. It carries out the reaction N(6)-dimethylallyladenosine(37) in tRNA + (sulfur carrier)-SH + AH2 + 2 S-adenosyl-L-methionine = 2-methylsulfanyl-N(6)-dimethylallyladenosine(37) in tRNA + (sulfur carrier)-H + 5'-deoxyadenosine + L-methionine + A + S-adenosyl-L-homocysteine + 2 H(+). Catalyzes the methylthiolation of N6-(dimethylallyl)adenosine (i(6)A), leading to the formation of 2-methylthio-N6-(dimethylallyl)adenosine (ms(2)i(6)A) at position 37 in tRNAs that read codons beginning with uridine. This Geotalea uraniireducens (strain Rf4) (Geobacter uraniireducens) protein is tRNA-2-methylthio-N(6)-dimethylallyladenosine synthase.